Here is a 199-residue protein sequence, read N- to C-terminus: SCO2-like protein RC0042 (199 aa).

Belongs to the SCO1/2 family.

The polypeptide is SCO2-like protein RC0042 (Rickettsia conorii (strain ATCC VR-613 / Malish 7)).